Consider the following 425-residue polypeptide: Sucrose-phosphatase 2 (425 aa).

Belongs to the sucrose phosphatase family. Homodimer. Mg(2+) is required as a cofactor.

The catalysed reaction is sucrose 6(F)-phosphate + H2O = sucrose + phosphate. It participates in glycan biosynthesis; sucrose biosynthesis; sucrose from D-fructose 6-phosphate and UDP-alpha-D-glucose: step 2/2. With respect to regulation, inhibited by EDTA. Catalyzes the final step of sucrose synthesis. This Nicotiana tabacum (Common tobacco) protein is Sucrose-phosphatase 2 (SPP2).